We begin with the raw amino-acid sequence, 134 residues long: Transcription antitermination protein NusB (134 aa).

Belongs to the NusB family.

Its function is as follows. Involved in transcription antitermination. Required for transcription of ribosomal RNA (rRNA) genes. Binds specifically to the boxA antiterminator sequence of the ribosomal RNA (rrn) operons. This Shewanella sp. (strain MR-4) protein is Transcription antitermination protein NusB.